The following is a 692-amino-acid chain: Elongation factor G (692 aa).

The region spanning 8 to 283 is the tr-type G domain; that stretch reads KNTRNIGIMA…AVVDYLPSPV (276 aa). Residues 17–24, 81–85, and 135–138 contribute to the GTP site; these read AHIDAGKT, DTPGH, and NKMD.

Belongs to the TRAFAC class translation factor GTPase superfamily. Classic translation factor GTPase family. EF-G/EF-2 subfamily.

It is found in the cytoplasm. Functionally, catalyzes the GTP-dependent ribosomal translocation step during translation elongation. During this step, the ribosome changes from the pre-translocational (PRE) to the post-translocational (POST) state as the newly formed A-site-bound peptidyl-tRNA and P-site-bound deacylated tRNA move to the P and E sites, respectively. Catalyzes the coordinated movement of the two tRNA molecules, the mRNA and conformational changes in the ribosome. The protein is Elongation factor G of Exiguobacterium sp. (strain ATCC BAA-1283 / AT1b).